We begin with the raw amino-acid sequence, 134 residues long: MAKSPNNSAAQRVRKKVRKNVADGIAHVHASFNNTIITITDRQGNALSWASSGGQGFKGSRKSTPFAAQVASEVAGRAAIEQGIKNLDVEIKGPGPGRESSVRALGALGIRINSIADVTPVPHNGCRPQKRRRI.

The protein belongs to the universal ribosomal protein uS11 family. In terms of assembly, part of the 30S ribosomal subunit. Interacts with proteins S7 and S18. Binds to IF-3.

Located on the platform of the 30S subunit, it bridges several disparate RNA helices of the 16S rRNA. Forms part of the Shine-Dalgarno cleft in the 70S ribosome. The protein is Small ribosomal subunit protein uS11 of Polaromonas naphthalenivorans (strain CJ2).